The sequence spans 93 residues: Ferredoxin-2 (93 aa).

One can recognise a 2Fe-2S ferredoxin-type domain in the interval 2 to 91 (YKVTLKTPDG…DVVIETHKED (90 aa)). Residues Cys-37, Cys-42, Cys-45, and Cys-75 each contribute to the [2Fe-2S] cluster site.

It belongs to the 2Fe2S plant-type ferredoxin family. [2Fe-2S] cluster serves as cofactor.

It is found in the plastid. It localises to the chloroplast. Ferredoxins are iron-sulfur proteins that transfer electrons in a wide variety of metabolic reactions. This Equisetum arvense (Field horsetail) protein is Ferredoxin-2.